The following is a 378-amino-acid chain: MSHVDDGFRSLTLKRFPQTDDVNPLLAWEAADEYLLQQLDETEIRGPVLILNDTFGALSCALAEHSPYSIGDSYLSELGTRENLRHNGIAESSVTFLDSTADYPQAPGVVLIKVPKTLALLEQQLRALRKVVTAQTRIIAGAKARDIHTSTLELFEKVLGPTTTTLAWKKARLINCTFSHPQLADAPQTLNWKLEDTGWTIHNHANVFSRTGLDIGARFFMQHLPENLDGEIVDLGCGNGVIGLSLLAKNPQANVVFVDESPMAVDSSRLNVETNLPEAFERCEFMINNALSGVEPFRFNAVFCNPPFHQKHALTDNIAWEMFHHARRCLKINGELYIVANRHLDYFHKLKKIFGNCATIATNNKFVILKAVKQGRRR.

The protein belongs to the methyltransferase superfamily. RlmG family.

The protein localises to the cytoplasm. The enzyme catalyses guanosine(1835) in 23S rRNA + S-adenosyl-L-methionine = N(2)-methylguanosine(1835) in 23S rRNA + S-adenosyl-L-homocysteine + H(+). In terms of biological role, specifically methylates the guanine in position 1835 (m2G1835) of 23S rRNA. In Salmonella heidelberg (strain SL476), this protein is Ribosomal RNA large subunit methyltransferase G.